Consider the following 864-residue polypeptide: Leucine--tRNA ligase (864 aa).

The 'HIGH' region signature appears at 42–52; it reads PYPSGKLHMGH. The short motif at 624–628 is the 'KMSKS' region element; that stretch reads KMSKS. ATP is bound at residue lysine 627.

It belongs to the class-I aminoacyl-tRNA synthetase family.

The protein resides in the cytoplasm. It catalyses the reaction tRNA(Leu) + L-leucine + ATP = L-leucyl-tRNA(Leu) + AMP + diphosphate. This Burkholderia cenocepacia (strain HI2424) protein is Leucine--tRNA ligase.